A 362-amino-acid polypeptide reads, in one-letter code: TFLVRESESKPGDYSLSIQDGDNVKHYRIRKLDEGGFFITRRAVFNTLKDLVQYYQNESDGLCVNLRQPCRPLERPQIDLSHKTKDMWEISRDSITLIRKLGAGQFGEVYQGLWNNSTPVAVKTLKAGTMQPAAFLAEAQIMKKLRHPKLIQLYAVCTQGEPVYIITELMSKGSLLDYLQGEAGALKLPQLIDMAAQVAAGMAYLELHNYIHRDLAARNILVGDNNICKVADFGLARLIVSDDYNATEGAKFPIKWTAPEAALFNRFSIKSDVWSFGILITELVTYGRIPYPGMSNAEVLQNLDKGYRMPCPVTTPESLYQIMLDCWKRNPADRPTFEALQWRLEDFFVLDAGQYQHAADVL.

In terms of domain architecture, SH2 spans 1–70 (TFLVRESESK…GLCVNLRQPC (70 aa)). Positions 95-348 (ITLIRKLGAG…ALQWRLEDFF (254 aa)) constitute a Protein kinase domain. ATP contacts are provided by residues 101–109 (LGAGQFGEV) and lysine 123. Aspartate 214 acts as the Proton acceptor in catalysis.

It belongs to the protein kinase superfamily. Tyr protein kinase family.

The protein resides in the cytoplasm. The enzyme catalyses L-tyrosyl-[protein] + ATP = O-phospho-L-tyrosyl-[protein] + ADP + H(+). This chain is Tyrosine-protein kinase SRK2 (SRK2), found in Spongilla lacustris (Freshwater sponge).